The chain runs to 499 residues: MTISYTLDVSQTNLQSFFSLLLRWRGSVWKAVFGQLAVWTAVFLLISCIYRYMLSPSQQDVFEQLIRYFDNKLDANIPLTFLLGFFVSFVVARWGSILNGIGWIDDASLLFATYIRGADEETRVIRRNLVRYLVLSQALVLRDISMQVRKRFPTMDTLAASGLMTHEEMDILDHIKDPYSRYWTSIQWSLNLVYECQKKGKVDSYYLMNKIVDEIGKFRHGLASLLKYDWVPVPLVYPQVIFLAVRIYFMICLIGRQFIVTGPNPSGIDLWLPITTMVQFLVYMGWMKVAEALLNPLGEDDDDLECNYIIDKNLITGLSIVDTMWKHDDTGYSMVEEHMAKTPAQKKDEFWGIDKIAPLYSMESAERSVHPLVGSASKINLVKNKKEIVMTPHKNKLSELDPSEQKTYLRRVNVSDHNAKHAKQRGLERANSPDKCLSKMRSRSNGKFRTSANGSQNGVDLWTRAGDIEMNVATSNPNQVHPHSIAVFPPEEQQTTSRH.

4 helical membrane-spanning segments follow: residues 29–49 (WKAVFGQLAVWTAVFLLISCI), 77–97 (IPLTFLLGFFVSFVVARWGSI), 235–255 (LVYPQVIFLAVRIYFMICLIG), and 267–287 (GIDLWLPITTMVQFLVYMGWM). Residues 417–432 (HNAKHAKQRGLERANS) are compositionally biased toward basic and acidic residues. 2 disordered regions span residues 417 to 455 (HNAKHAKQRGLERANSPDKCLSKMRSRSNGKFRTSANGS) and 474 to 499 (TSNPNQVHPHSIAVFPPEEQQTTSRH).

Belongs to the anion channel-forming bestrophin (TC 1.A.46) family. Calcium-sensitive chloride channel subfamily. Forms oligomers.

The protein resides in the cell membrane. Its function is as follows. Forms chloride channels. The polypeptide is Bestrophin homolog 22 (best-22) (Caenorhabditis elegans).